The chain runs to 494 residues: Cytochrome P450 2A8 (494 aa).

Cysteine 439 provides a ligand contact to heme.

This sequence belongs to the cytochrome P450 family. The cofactor is heme. Liver.

The protein resides in the endoplasmic reticulum membrane. It localises to the microsome membrane. It carries out the reaction an organic molecule + reduced [NADPH--hemoprotein reductase] + O2 = an alcohol + oxidized [NADPH--hemoprotein reductase] + H2O + H(+). Functionally, highly active in 7-ethoxycoumarin O-deethylation, and benzphetamine N-demethylation; moderately active in testosterone 7-alpha-hydroxylation, ethylmorphine N-demethylation, p-nitroanisole O-demethylation; and only slightly active in benzopyrene 3-hydroxylation, 7-ethoxyresorufin O-deethylation, testosterone 2-alpha-hydroxylation and testosterone 17-oxidation. Competent in the metabolic activation of aflatoxin B1. The sequence is that of Cytochrome P450 2A8 (CYP2A8) from Mesocricetus auratus (Golden hamster).